The primary structure comprises 217 residues: Adenylate kinase (217 aa).

Position 10 to 15 (10 to 15) interacts with ATP; sequence GAGKGT. The interval 30-59 is NMP; the sequence is STGDMFRAAMKEETQLGLEAKSFIDKGELV. Residues T31, R36, 57–59, 85–88, and Q92 each bind AMP; these read ELV and GFPR. The tract at residues 126 to 163 is LID; that stretch reads GRRICKNCGATYHLVFNPPAKENVCDKCGGELYQRADD. R127 contributes to the ATP binding site. Zn(2+) contacts are provided by C130 and C133. Residue 136–137 participates in ATP binding; sequence TY. Residues C150 and C153 each coordinate Zn(2+). R160 and R171 together coordinate AMP. K199 lines the ATP pocket.

It belongs to the adenylate kinase family. In terms of assembly, monomer.

It localises to the cytoplasm. It catalyses the reaction AMP + ATP = 2 ADP. The protein operates within purine metabolism; AMP biosynthesis via salvage pathway; AMP from ADP: step 1/1. Its function is as follows. Catalyzes the reversible transfer of the terminal phosphate group between ATP and AMP. Plays an important role in cellular energy homeostasis and in adenine nucleotide metabolism. This Bacillus pumilus (strain SAFR-032) protein is Adenylate kinase.